The following is a 270-amino-acid chain: Thiamine thiazole synthase (270 aa).

NAD(+)-binding positions include alanine 39, 58-59 (EQ), glycine 66, and leucine 130. 2,3-didehydroalanine (Cys) is present on cysteine 159. Aspartate 161 serves as a coordination point for NAD(+). The Fe cation site is built by aspartate 161 and histidine 176. Position 223 (isoleucine 223) interacts with NAD(+). Arginine 233 serves as a coordination point for glycine.

This sequence belongs to the THI4 family. As to quaternary structure, homooctamer; tetramer of dimers. The cofactor is Fe(2+). Post-translationally, during the catalytic reaction, a sulfide is transferred from Cys-159 to a reaction intermediate, generating a dehydroalanine residue.

It carries out the reaction [ADP-thiazole synthase]-L-cysteine + glycine + NAD(+) = [ADP-thiazole synthase]-dehydroalanine + ADP-5-ethyl-4-methylthiazole-2-carboxylate + nicotinamide + 3 H2O + 2 H(+). The protein operates within cofactor biosynthesis; thiamine diphosphate biosynthesis. Functionally, involved in biosynthesis of the thiamine precursor thiazole. Catalyzes the conversion of NAD and glycine to adenosine diphosphate 5-(2-hydroxyethyl)-4-methylthiazole-2-carboxylic acid (ADT), an adenylated thiazole intermediate. The reaction includes an iron-dependent sulfide transfer from a conserved cysteine residue of the protein to a thiazole intermediate. The enzyme can only undergo a single turnover, which suggests it is a suicide enzyme. The chain is Thiamine thiazole synthase from Aeropyrum pernix (strain ATCC 700893 / DSM 11879 / JCM 9820 / NBRC 100138 / K1).